Consider the following 513-residue polypeptide: Sucrose transport protein SUC1 (513 aa).

A compositionally biased stretch (basic and acidic residues) spans 1–11 (MGAYETEKPTK). Positions 1–26 (MGAYETEKPTKDAAALETQSPEDFDQ) are disordered. Residues 1–32 (MGAYETEKPTKDAAALETQSPEDFDQPSPLRK) are Cytoplasmic-facing. Residue S20 is modified to Phosphoserine. A helical transmembrane segment spans residues 33–53 (IISVASIAAGVQFGWALQLSL). The Extracellular segment spans residues 54–67 (LTPYVQLLGIPHKW). The chain crosses the membrane as a helical span at residues 68–88 (SSLIWLCGPVSGMIVQPIVGF). Topologically, residues 89-101 (HSDRCRSKFGRRR) are cytoplasmic. The chain crosses the membrane as a helical span at residues 102–122 (PFIATGAALVAVAVFLIGYAA). At 123–139 (DFGYKMGDKLEEKVKVR) the chain is on the extracellular side. A helical membrane pass occupies residues 140–160 (AIGIFALGFWILDVANNTLQG). The Cytoplasmic portion of the chain corresponds to 161–178 (PCRAFLADLAAGDAKRTR). The helical transmembrane segment at 179 to 199 (VANAFFSFFMAVGNVLGYAAG) threads the bilayer. At 200–224 (SYTNLHKMFPFTMTKACDIYCANLK) the chain is on the extracellular side. A helical transmembrane segment spans residues 225–245 (TCFFLSITLLLIVTVTSLWYV). The Cytoplasmic portion of the chain corresponds to 246–282 (NDKQWSPPPRNADDDEKTSSVPLFGEIFGAFKVMKRP). The chain crosses the membrane as a helical span at residues 283-303 (MWMLLIVTALNWIAWFPFLLF). Over 304–334 (DTDWMGREVFGGDSDGNERSKKLYSLGVQSG) the chain is Extracellular. A helical membrane pass occupies residues 335–355 (AMGLMFNSIVLGFMSLGVEWI). The Cytoplasmic segment spans residues 356–365 (GRKLGGAKRL). The chain crosses the membrane as a helical span at residues 366–386 (WGIVNFILAAGLAMTVLVTKF). Residues 387–408 (AEDHRKTAGDLAGPSASVKAGA) lie on the Extracellular side of the membrane. Residues 409 to 429 (LSLFAVLGIPLAITFSTPFAL) traverse the membrane as a helical segment. At 430–441 (ASIFSSCSGAGQ) the chain is on the cytoplasmic side. A helical membrane pass occupies residues 442–462 (GLSLGVLNLAIVIPQMIVSLG). The Extracellular segment spans residues 463–474 (GGPFDALFGGGN). A helical membrane pass occupies residues 475-495 (LPAFIVAAIAAAISGVLALTV). The Cytoplasmic segment spans residues 496-513 (LPSPPPDAPKATTMGGFH).

Belongs to the glycoside-pentoside-hexuronide (GPH) cation symporter transporter (TC 2.A.2.4) family. Expressed in flowers (at protein level). Highly expressed in pollen. Expressed in pollen tubes and root vascular cylinder, pericycle and endodermis.

It localises to the membrane. It catalyses the reaction sucrose(out) + H(+)(out) = sucrose(in) + H(+)(in). It participates in glycan biosynthesis; sucrose metabolism. Its activity is regulated as follows. Inhibited by DEPC, protonophores (e.g. dinitrophenol and carbonyl cyanide m-chlorophenyl-hydrazone (CCCP)), and SH group inhibitors (e.g. N-ethylmaleimide (NEM) and p-chloromercuriphenyl sulphonic acid (PCMPS)). Responsible for the transport of sucrose into the cell, with the concomitant uptake of protons (symport system). This transport is both voltage- and energy-dependent. Can also transport other glucosides such as maltose, alpha-phenylglucoside and beta-phenylglucoside. May also transport biotin. Required for normal pollen germination and anthocyanin accumulation induced by sucrose. The chain is Sucrose transport protein SUC1 from Arabidopsis thaliana (Mouse-ear cress).